Reading from the N-terminus, the 575-residue chain is Sodium/calcium exchanger NCL2 (575 aa).

3 consecutive transmembrane segments (helical) span residues 69–89 (FLPC…YGFL), 112–132 (IVGG…LILV), and 146–166 (VLIG…LLWG). Asn-179 is a glycosylation site (N-linked (GlcNAc...) asparagine). The next 2 helical transmembrane spans lie at 210-230 (IMAI…FKLH) and 237-257 (VLIG…YQVF). 2 consecutive EF-hand domains span residues 297–332 (PNVS…INFE) and 337–372 (NSNL…WLDE). Asn-298 carries an N-linked (GlcNAc...) asparagine glycan. Residues Asp-310, Asp-312, Asp-314, Lys-316, Glu-321, Asp-350, Ser-352, Asn-354, and Glu-361 each contribute to the Ca(2+) site. 5 helical membrane passes run 417 to 437 (WTCI…AASA), 457 to 477 (FISF…SAII), 494 to 514 (VYGG…ALVY), 522 to 542 (FSSE…FTSF), and 548 to 568 (LWTC…VYIL).

This sequence belongs to the Ca(2+):cation antiporter (CaCA) (TC 2.A.19) family.

It localises to the cell membrane. In terms of biological role, may function as a sodium/calcium exchanger (NCX) and participate in the maintenance of calcium homeostasis. May play a role abiotic stress responses. The polypeptide is Sodium/calcium exchanger NCL2 (Oryza sativa subsp. japonica (Rice)).